A 190-amino-acid chain; its full sequence is Dynactin subunit 6 (190 aa).

T186 carries the post-translational modification Phosphothreonine; by CDK1.

It belongs to the dynactin subunits 5/6 family. Dynactin subunit 6 subfamily. In terms of assembly, subunit of dynactin, a multiprotein complex part of a tripartite complex with dynein and a adapter, such as BICDL1, BICD2 or HOOK3. The dynactin complex is built around ACTR1A/ACTB filament and consists of an actin-related filament composed of a shoulder domain, a pointed end and a barbed end. Its length is defined by its flexible shoulder domain. The soulder is composed of 2 DCTN1 subunits, 4 DCTN2 and 2 DCTN3. The 4 DCNT2 (via N-terminus) bind the ACTR1A filament and act as molecular rulers to determine the length. The pointed end is important for binding dynein-dynactin cargo adapters. Consists of 4 subunits: ACTR10, DCNT4, DCTN5 and DCTN6. Within the complex DCTN6 forms a heterodimer with DCTN5. The barbed end is composed of a CAPZA1:CAPZB heterodimers, which binds ACTR1A/ACTB filament and dynactin and stabilizes dynactin. Interacts with PLK1. Interacts with N4BP2L1. In terms of processing, phosphorylation at Thr-186 by CDK1 during mitotic prometaphase creates a binding site for PLK1 that facilitates its recruitment to kinetochores.

The protein localises to the cytoplasm. It is found in the cytoskeleton. Its subcellular location is the chromosome. The protein resides in the centromere. It localises to the kinetochore. Part of the dynactin complex that activates the molecular motor dynein for ultra-processive transport along microtubules. In Bos taurus (Bovine), this protein is Dynactin subunit 6 (DCTN6).